We begin with the raw amino-acid sequence, 270 residues long: MKNIFIVLIFLFLSSCAEVKAQDKQHEEQQIIEQEPLQNNETPQEANQESINSANTAKSVLHNHDNNQTESVLTQDLHEQKKTAITTKVTFKIDNNDMVLGNKKSNVIVVEYFSPTCPHCAYYHQTIFPALKKKYIDTNKIAYVVREFIATKQDLDAAILARCKGDINSFIQFHNIILQQQDKWAYSNKYRELLTDIGQLGGISPEEYKQCLNSDKITETLIANTNLVAKAPKFIGTPSFFVNGVQTENYSIDNISRAVDRALEDETKSK.

Positions 1-17 (MKNIFIVLIFLFLSSCA) are cleaved as a signal peptide. A Thioredoxin domain is found at 71–264 (SVLTQDLHEQ…ISRAVDRALE (194 aa)). An intrachain disulfide couples Cys117 to Cys120.

It belongs to the thioredoxin family. DsbA subfamily.

The protein resides in the periplasm. Its function is as follows. May be required for disulfide bond formation in some proteins. The chain is Putative protein-disulfide oxidoreductase RT0103 from Rickettsia typhi (strain ATCC VR-144 / Wilmington).